A 392-amino-acid polypeptide reads, in one-letter code: 1-deoxy-D-xylulose 5-phosphate reductoisomerase (392 aa).

6 residues coordinate NADPH: T10, G11, S12, I13, N38, and N124. K125 lines the 1-deoxy-D-xylulose 5-phosphate pocket. Residue E126 participates in NADPH binding. D150 is a Mn(2+) binding site. Residues S151, E152, S176, and H199 each coordinate 1-deoxy-D-xylulose 5-phosphate. A Mn(2+)-binding site is contributed by E152. G205 serves as a coordination point for NADPH. S212, N217, K218, and E221 together coordinate 1-deoxy-D-xylulose 5-phosphate. E221 is a binding site for Mn(2+).

It belongs to the DXR family. Mg(2+) is required as a cofactor. It depends on Mn(2+) as a cofactor.

The enzyme catalyses 2-C-methyl-D-erythritol 4-phosphate + NADP(+) = 1-deoxy-D-xylulose 5-phosphate + NADPH + H(+). It participates in isoprenoid biosynthesis; isopentenyl diphosphate biosynthesis via DXP pathway; isopentenyl diphosphate from 1-deoxy-D-xylulose 5-phosphate: step 1/6. Functionally, catalyzes the NADPH-dependent rearrangement and reduction of 1-deoxy-D-xylulose-5-phosphate (DXP) to 2-C-methyl-D-erythritol 4-phosphate (MEP). The chain is 1-deoxy-D-xylulose 5-phosphate reductoisomerase from Synechococcus sp. (strain JA-2-3B'a(2-13)) (Cyanobacteria bacterium Yellowstone B-Prime).